The following is a 231-amino-acid chain: 2,3,4,5-tetrahydropyridine-2,6-dicarboxylate N-acetyltransferase (231 aa).

Belongs to the transferase hexapeptide repeat family. DapH subfamily.

The enzyme catalyses (S)-2,3,4,5-tetrahydrodipicolinate + acetyl-CoA + H2O = L-2-acetamido-6-oxoheptanedioate + CoA. The protein operates within amino-acid biosynthesis; L-lysine biosynthesis via DAP pathway; LL-2,6-diaminopimelate from (S)-tetrahydrodipicolinate (acetylase route): step 1/3. Functionally, catalyzes the transfer of an acetyl group from acetyl-CoA to tetrahydrodipicolinate. This chain is 2,3,4,5-tetrahydropyridine-2,6-dicarboxylate N-acetyltransferase, found in Thermosipho melanesiensis (strain DSM 12029 / CIP 104789 / BI429).